The chain runs to 745 residues: MLPFAPQDEPWDREMEVFSGGGASSGEVNGLKMVDEPMEEGEADSCHDEGVVKEIPITHHVKEGYEKADPAQFELLKVLGQGSFGKVFLVRKKTGPDAGQLYAMKVLKKASLKVRDRVRTKMERDILVEVNHPFIVKLHYAFQTEGKLYLILDFLRGGDVFTRLSKEVLFTEEDVKFYLAELALALDHLHQLGIVYRDLKPENILLDEIGHIKLTDFGLSKESVDQEKKAYSFCGTVEYMAPEVVNRRGHSQSADWWSYGVLMFEMLTGTLPFQGKDRNETMNMILKAKLGMPQFLSAEAQSLLRMLFKRNPANRLGSEGVEEIKRHLFFANIDWDKLYKREVQPPFKPASGKPDDTFCFDPEFTAKTPKDSPGLPASANAHQLFKGFSFVATSIAEEYKITPITSANVLPIVQINGNAAQFGEVYELKEDIGVGSYSVCKRCIHATTNMEFAVKIIDKSKRDPSEEIEILMRYGQHPNIITLKDVFDDGRYVYLVTDLMKGGELLDRILKQKCFSEREASDILYVISKTVDYLHCQGVVHRDLKPSNILYMDESASADSIRICDFGFAKQLRGENGLLLTPCYTANFVAPEVLMQQGYDAACDIWSLGVLFYTMLAGYTPFANGPNDTPEEILLRIGNGKFSLSGGNWDNISDGAKDLLSHMLHMDPHQRYTAEQILKHSWITHRDQLPNDQPKRNDVSHVVKGAMVATYSALTHKTFQPVLEPVAASSLAQRRSMKKRTSTGL.

A disordered region spans residues 1–28; the sequence is MLPFAPQDEPWDREMEVFSGGGASSGEV. The Protein kinase 1 domain occupies 73-330; sequence FELLKVLGQG…VEEIKRHLFF (258 aa). ATP contacts are provided by residues 79–87 and K105; that span reads LGQGSFGKV. The Proton acceptor role is filled by D198. 3 positions are modified to phosphoserine: S232, S372, and S389. The region spanning 331 to 400 is the AGC-kinase C-terminal domain; sequence ANIDWDKLYK…VATSIAEEYK (70 aa). One can recognise a Protein kinase 2 domain in the interval 426–683; it reads YELKEDIGVG…AEQILKHSWI (258 aa). ATP-binding positions include 432 to 440 and K455; that span reads IGVGSYSVC. D543 acts as the Proton acceptor in catalysis. A Phosphothreonine modification is found at T581.

The protein belongs to the protein kinase superfamily. AGC Ser/Thr protein kinase family. S6 kinase subfamily. As to quaternary structure, forms a complex with MAPK3/ERK1 but not with MAPK9 or MAPK14 in serum-starved cells. The cofactor is Mg(2+). In terms of processing, phosphorylated at Ser-232, Ser-372, and Ser-389 in serum-starved cells.

The protein localises to the cytoplasm. Its subcellular location is the cytosol. The protein resides in the nucleus. It catalyses the reaction L-seryl-[protein] + ATP = O-phospho-L-seryl-[protein] + ADP + H(+). The catalysed reaction is L-threonyl-[protein] + ATP = O-phospho-L-threonyl-[protein] + ADP + H(+). Constitutively activated by phosphorylation at Ser-232, Ser-372, and Ser-389 in serum-starved cells. Does not require growth factor stimulation for significant kinase activity. Its function is as follows. Constitutively active serine/threonine-protein kinase that exhibits growth-factor-independent kinase activity and that may participate in p53/TP53-dependent cell growth arrest signaling and play an inhibitory role during embryogenesis. The polypeptide is Ribosomal protein S6 kinase alpha-6 (RPS6KA6) (Homo sapiens (Human)).